Consider the following 379-residue polypeptide: Homoserine O-acetyltransferase (379 aa).

The region spanning 52 to 356 (NVVMVLHALT…IRGHDGFLVE (305 aa)) is the AB hydrolase-1 domain. Ser-157 acts as the Nucleophile in catalysis. Position 227 (Arg-227) interacts with substrate. Residues Asp-320 and His-350 contribute to the active site. Asp-351 provides a ligand contact to substrate.

The protein belongs to the AB hydrolase superfamily. MetX family. In terms of assembly, homodimer.

The protein localises to the cytoplasm. It catalyses the reaction L-homoserine + acetyl-CoA = O-acetyl-L-homoserine + CoA. The protein operates within amino-acid biosynthesis; L-methionine biosynthesis via de novo pathway; O-acetyl-L-homoserine from L-homoserine: step 1/1. Its function is as follows. Transfers an acetyl group from acetyl-CoA to L-homoserine, forming acetyl-L-homoserine. This is Homoserine O-acetyltransferase from Mycobacterium marinum (strain ATCC BAA-535 / M).